We begin with the raw amino-acid sequence, 556 residues long: Membrane protein insertase YidC (556 aa).

A helical transmembrane segment spans residues 7-27 (ILLVALAVVAYLMVLQWNQDY). 2 disordered regions span residues 35 to 59 (ETAQ…GNAN) and 126 to 152 (SSER…PQYS). A compositionally biased stretch (low complexity) spans 36 to 54 (TAQSQPAAPALPDSPSATT). The next 4 membrane-spanning stretches (helical) occupy residues 365–385 (LLGN…LAFF), 435–455 (LGGC…YWVL), 468–488 (FWIT…IMGV), and 513–533 (PIIF…YWVV).

The protein belongs to the OXA1/ALB3/YidC family. Type 1 subfamily. Interacts with the Sec translocase complex via SecD. Specifically interacts with transmembrane segments of nascent integral membrane proteins during membrane integration.

The protein localises to the cell inner membrane. Its function is as follows. Required for the insertion and/or proper folding and/or complex formation of integral membrane proteins into the membrane. Involved in integration of membrane proteins that insert both dependently and independently of the Sec translocase complex, as well as at least some lipoproteins. Aids folding of multispanning membrane proteins. The protein is Membrane protein insertase YidC of Stutzerimonas stutzeri (strain A1501) (Pseudomonas stutzeri).